The sequence spans 1071 residues: Carbamoyl phosphate synthase large chain (1071 aa).

The interval 1 to 399 is carboxyphosphate synthetic domain; sequence MPKREDIKKV…SLLKAFKSLD (399 aa). The ATP site is built by arginine 129, arginine 169, glycine 175, glycine 176, glutamate 208, valine 210, glutamate 215, glycine 241, valine 242, histidine 243, glutamine 284, and glutamate 296. The 193-residue stretch at 133–325 folds into the ATP-grasp 1 domain; it reads KETMLRIGEK…IARVTAKIAI (193 aa). 3 residues coordinate Mg(2+): glutamine 284, glutamate 296, and asparagine 298. Mn(2+)-binding residues include glutamine 284, glutamate 296, and asparagine 298. The oligomerization domain stretch occupies residues 400–540; it reads IDNQLGNKHW…YSTYEDSCET (141 aa). The interval 541-932 is carbamoyl phosphate synthetic domain; that stretch reads NATTDKKKIL…YKAELAADNV (392 aa). Positions 673–864 constitute an ATP-grasp 2 domain; it reads YILMKELGVP…LAKIAAKVIA (192 aa). ATP-binding residues include arginine 709, aspartate 748, leucine 750, glutamate 755, glycine 780, valine 781, histidine 782, serine 783, glutamine 823, and glutamate 835. Positions 823, 835, and 837 each coordinate Mg(2+). Mn(2+) contacts are provided by glutamine 823, glutamate 835, and asparagine 837. The region spanning 931–1071 is the MGS-like domain; it reads NVLPLTGKVF…INEYHKEMEN (141 aa). The tract at residues 933 to 1071 is allosteric domain; sequence LPLTGKVFLS…INEYHKEMEN (139 aa).

It belongs to the CarB family. Composed of two chains; the small (or glutamine) chain promotes the hydrolysis of glutamine to ammonia, which is used by the large (or ammonia) chain to synthesize carbamoyl phosphate. Tetramer of heterodimers (alpha,beta)4. Mg(2+) is required as a cofactor. Requires Mn(2+) as cofactor.

It carries out the reaction hydrogencarbonate + L-glutamine + 2 ATP + H2O = carbamoyl phosphate + L-glutamate + 2 ADP + phosphate + 2 H(+). The catalysed reaction is hydrogencarbonate + NH4(+) + 2 ATP = carbamoyl phosphate + 2 ADP + phosphate + 2 H(+). The protein operates within amino-acid biosynthesis; L-arginine biosynthesis; carbamoyl phosphate from bicarbonate: step 1/1. It functions in the pathway pyrimidine metabolism; UMP biosynthesis via de novo pathway; (S)-dihydroorotate from bicarbonate: step 1/3. In terms of biological role, large subunit of the glutamine-dependent carbamoyl phosphate synthetase (CPSase). CPSase catalyzes the formation of carbamoyl phosphate from the ammonia moiety of glutamine, carbonate, and phosphate donated by ATP, constituting the first step of 2 biosynthetic pathways, one leading to arginine and/or urea and the other to pyrimidine nucleotides. The large subunit (synthetase) binds the substrates ammonia (free or transferred from glutamine from the small subunit), hydrogencarbonate and ATP and carries out an ATP-coupled ligase reaction, activating hydrogencarbonate by forming carboxy phosphate which reacts with ammonia to form carbamoyl phosphate. This is Carbamoyl phosphate synthase large chain from Methanosarcina barkeri (strain Fusaro / DSM 804).